The sequence spans 521 residues: Cytoplasmic polyadenylation element-binding protein 2 (521 aa).

Positions 1–11 are enriched in pro residues; that stretch reads MNLPQQQPPAA. 2 disordered regions span residues 1-35 and 50-88; these read MNLPQQQPPAAAPQQPQSRRSPVSPQLQQQHQAAA and PLLKQSPWSNHQNSGWGTASMSWGAMHGRDHRRSGNMGI. Positions 12–35 are enriched in low complexity; it reads APQQPQSRRSPVSPQLQQQHQAAA. Ser-21 bears the Phosphoserine mark. The span at 55–70 shows a compositional bias: polar residues; that stretch reads SPWSNHQNSGWGTASM. RRM domains follow at residues 264–355 and 372–454; these read RKVF…PWNL and KTIF…PYVL.

It belongs to the RRM CPEB family. In terms of assembly, interacts with TENT2/GLD2. In terms of tissue distribution, expressed in embryo, cerebellum, salivary gland, thymus, heart, liver, lung, spleen, kidney, intestine, ovary and round spermatids. Weakly expressed in granular cells of dentate gyrus and the pyramidal cells of CA3 and CA1 of the hippocampus.

It localises to the cytoplasm. Functionally, may play a role in translational regulation of stored mRNAs in transcriptionally inactive haploid spermatids. Binds to poly(U) RNA oligomers. Required for cell cycle progression, specifically for the transition from metaphase to anaphase. This Mus musculus (Mouse) protein is Cytoplasmic polyadenylation element-binding protein 2 (Cpeb2).